Consider the following 463-residue polypeptide: RuvB-like 2 (463 aa).

Alanine 2 bears the N-acetylalanine mark. Residue lysine 9 forms a Glycyl lysine isopeptide (Lys-Gly) (interchain with G-Cter in SUMO2) linkage. 77–84 (GQPGTGKT) serves as a coordination point for ATP. The residue at position 437 (serine 437) is a Phosphoserine. Residues lysine 444 and lysine 456 each participate in a glycyl lysine isopeptide (Lys-Gly) (interchain with G-Cter in SUMO2) cross-link.

It belongs to the RuvB family. In terms of assembly, forms homohexameric rings. Can form a dodecamer with RUVBL1 made of two stacked hexameric rings; however, even though RUVBL1 and RUVBL2 are present in equimolar ratio, the oligomeric status of each hexamer is not known. Oligomerization may regulate binding to nucleic acids and conversely, binding to nucleic acids may affect the dodecameric assembly. Interaction of the complex with DHX34 results in conformational changes of the N-terminus of the RUVBL2 subunits, resulting in loss of nucleotide binding ability and ATP hydrolysis of the complex. Interacts with the transcriptional activation domain of MYC. Interacts with ATF2. Component of the RNA polymerase II holoenzyme complex. May also act to bridge the LEF1/TCF1-CTNNB1 complex and TBP. Component of the NuA4 histone acetyltransferase complex which contains the catalytic subunit KAT5/TIP60 and the subunits EP400, TRRAP/PAF400, BRD8/SMAP, EPC1, DMAP1/DNMAP1, RUVBL1/TIP49, RUVBL2, ING3, actin, ACTL6A/BAF53A, MORF4L1/MRG15, MORF4L2/MRGX, MRGBP, YEATS4/GAS41, VPS72/YL1 and MEAF6. The NuA4 complex interacts with MYC and the adenovirus E1A protein. RUVBL2 interacts with EP400. Component of a NuA4-related complex which contains EP400, TRRAP/PAF400, SRCAP, BRD8/SMAP, EPC1, DMAP1/DNMAP1, RUVBL1/TIP49, RUVBL2, actin, ACTL6A/BAF53A, VPS72 and YEATS4/GAS41. Interacts with NPAT. Component of the chromatin-remodeling INO80 complex; specifically part of a complex module associated with the helicase ATP-binding and the helicase C-terminal domain of INO80. Component of some MLL1/MLL complex, at least composed of the core components KMT2A/MLL1, ASH2L, HCFC1/HCF1, WDR5 and RBBP5, as well as the facultative components BACC1, CHD8, E2F6, HSP70, INO80C, KANSL1, LAS1L, MAX, MCRS1, MGA, MYST1/MOF, PELP1, PHF20, PRP31, RING2, RUVB1/TIP49A, RUVB2/TIP49B, SENP3, TAF1, TAF4, TAF6, TAF7, TAF9 and TEX10. Interacts with IGHMBP2. Interacts with TELO2. Interacts with HINT1. Component of a SWR1-like complex. Component of the R2TP complex composed at least of RUVBL1, RUVBL2, RPAP3 and PIHD1. Component of the PAQosome complex which is responsible for the biogenesis of several protein complexes and which consists of R2TP complex members RUVBL1, RUVBL2, RPAP3 and PIH1D1, URI complex members PFDN2, PFDN6, PDRG1, UXT and URI1 as well as ASDURF, POLR2E and DNAAF10/WDR92. Interacts with ITFG1. Interacts with ZMYND10. Interacts with WAC; WAC positively regulates MTOR activity by promoting the assembly of the TTT complex composed of TELO2, TTI1 and TTI2 and the RUVBL complex composed of RUVBL1 and RUVBL2 into the TTT-RUVBL complex which leads to the dimerization of the mTORC1 complex and its subsequent activation. Forms a complex with APPL1 and APPL2. Interacts with ZNHIT2 (via HIT-type zinc finger) in the presence of ATP or ADP; shows a stronger interaction in the presence of ADP. The RUVBL1/RUVBL2 complex interacts with ZNHIT1 (via HIT-type zinc finger), ZNHIT3 (via HIT-type zinc finger), ZNHIT6 (via HIT-type zinc finger) and DDX59/ZNHIT5 (via HIT-type zinc finger) in the presence of ADP. Interacts with NOPCHAP1; the interaction is direct and disrupted upon ATP binding. Interacts with SMG1.

Its subcellular location is the nucleus matrix. The protein resides in the nucleus. It localises to the nucleoplasm. The protein localises to the cytoplasm. It is found in the membrane. Its subcellular location is the dynein axonemal particle. The enzyme catalyses ATP + H2O = ADP + phosphate + H(+). Possesses single-stranded DNA-stimulated ATPase and ATP-dependent DNA helicase (5' to 3') activity; hexamerization is thought to be critical for ATP hydrolysis and adjacent subunits in the ring-like structure contribute to the ATPase activity. Component of the NuA4 histone acetyltransferase complex which is involved in transcriptional activation of select genes principally by acetylation of nucleosomal histones H4 and H2A. This modification may both alter nucleosome-DNA interactions and promote interaction of the modified histones with other proteins which positively regulate transcription. This complex may be required for the activation of transcriptional programs associated with oncogene and proto-oncogene mediated growth induction, tumor suppressor mediated growth arrest and replicative senescence, apoptosis, and DNA repair. The NuA4 complex ATPase and helicase activities seem to be, at least in part, contributed by the association of RUVBL1 and RUVBL2 with EP400. NuA4 may also play a direct role in DNA repair when recruited to sites of DNA damage. Component of a SWR1-like complex that specifically mediates the removal of histone H2A.Z/H2AZ1 from the nucleosome. Proposed core component of the chromatin remodeling INO80 complex which exhibits DNA- and nucleosome-activated ATPase activity and catalyzes ATP-dependent nucleosome sliding. Plays an essential role in oncogenic transformation by MYC and also modulates transcriptional activation by the LEF1/TCF1-CTNNB1 complex. May also inhibit the transcriptional activity of ATF2. Involved in the endoplasmic reticulum (ER)-associated degradation (ERAD) pathway where it negatively regulates expression of ER stress response genes. May play a role in regulating the composition of the U5 snRNP complex. This Mus musculus (Mouse) protein is RuvB-like 2 (Ruvbl2).